The following is a 73-amino-acid chain: Translation initiation factor IF-1 (73 aa).

One can recognise an S1-like domain in the interval 1–73; sequence MPKKDGVIEI…SRGRIVYRYK (73 aa).

Belongs to the IF-1 family. In terms of assembly, component of the 30S ribosomal translation pre-initiation complex which assembles on the 30S ribosome in the order IF-2 and IF-3, IF-1 and N-formylmethionyl-tRNA(fMet); mRNA recruitment can occur at any time during PIC assembly.

The protein localises to the cytoplasm. Functionally, one of the essential components for the initiation of protein synthesis. Stabilizes the binding of IF-2 and IF-3 on the 30S subunit to which N-formylmethionyl-tRNA(fMet) subsequently binds. Helps modulate mRNA selection, yielding the 30S pre-initiation complex (PIC). Upon addition of the 50S ribosomal subunit IF-1, IF-2 and IF-3 are released leaving the mature 70S translation initiation complex. The protein is Translation initiation factor IF-1 of Kineococcus radiotolerans (strain ATCC BAA-149 / DSM 14245 / SRS30216).